Here is a 685-residue protein sequence, read N- to C-terminus: DNA-directed RNA polymerase subunit beta' (685 aa).

Zn(2+) is bound by residues Cys69, Cys71, Cys87, and Cys90. Mg(2+) is bound by residues Asp492, Asp494, and Asp496.

This sequence belongs to the RNA polymerase beta' chain family. RpoC1 subfamily. In plastids the minimal PEP RNA polymerase catalytic core is composed of four subunits: alpha, beta, beta', and beta''. When a (nuclear-encoded) sigma factor is associated with the core the holoenzyme is formed, which can initiate transcription. Mg(2+) is required as a cofactor. The cofactor is Zn(2+).

The protein localises to the plastid. The protein resides in the chloroplast. The catalysed reaction is RNA(n) + a ribonucleoside 5'-triphosphate = RNA(n+1) + diphosphate. Functionally, DNA-dependent RNA polymerase catalyzes the transcription of DNA into RNA using the four ribonucleoside triphosphates as substrates. The chain is DNA-directed RNA polymerase subunit beta' from Dioscorea elephantipes (Elephant's foot yam).